The chain runs to 550 residues: Sterol O-acyltransferase 1 (550 aa).

N-acetylmethionine is present on methionine 1. The segment at 1–36 (MVGEEKMSLRNRLSKSRENPEEDEDQRKPAKESLEA) is disordered. The Cytoplasmic segment spans residues 1 to 138 (MVGEEKMSLR…LDELLEVDHI (138 aa)). Position 8 is a phosphoserine (serine 8). Residues 15–34 (KSRENPEEDEDQRKPAKESL) show a composition bias toward basic and acidic residues. Cholesterol is bound at residue histidine 137. Residues 139 to 160 (RTIYHMFIALLILFILSTLVVD) form a helical membrane-spanning segment. Topologically, residues 161-180 (YIDEGRLVLEFSLLSYAFGK) are lumenal. A helical transmembrane segment spans residues 181–206 (FPTVVWTWWIMFLSTFSVPYFLFQRW). The Cytoplasmic segment spans residues 207-218 (ATGYSKSSHPLI). The helical transmembrane segment at 219-244 (NSLFHGFLFMVFQIGILGFGPTYVVL) threads the bilayer. The Lumenal portion of the chain corresponds to 245–252 (AYTLPPAS). A helical membrane pass occupies residues 253-276 (RFIIIFEQIRFVMKAHSFVRENVP). Topologically, residues 277–319 (RVLNSAKEKSSTVPIPTVNQYLYFLFAPTLIYRDSYPRNPTVR) are cytoplasmic. Residues 320-352 (WGYVAMQFAQVFGCFFYVYYIFERLCAPLFRNI) traverse the membrane as a helical segment. At 353 to 369 (KQEPFSARVLVLCVFNS) the chain is on the lumenal side. A helical transmembrane segment spans residues 370–395 (ILPGVLILFLTFFAFLHCWLNAFAEM). Topologically, residues 396-443 (LRFGDRMFYKDWWNSTSYSNYYRTWNVVVHDWLYYYAYKDFLWFFSKR) are cytoplasmic. The FYXDWWN motif motif lies at 403 to 409 (FYKDWWN). An acyl-CoA-binding residues include asparagine 415, arginine 418, asparagine 421, histidine 425, tyrosine 433, lysine 445, and serine 456. Residues 444–468 (FKSAAMLAAFAVSAVVHEYALAVCL) form a helical membrane-spanning segment. Histidine 460 is a catalytic residue. The Lumenal segment spans residues 469 to 474 (SFFYPV). A helical transmembrane segment spans residues 475 to 490 (LFVLFMFFGMAFNFIV). The Cytoplasmic segment spans residues 491–496 (NDSRKK). Residues 497 to 528 (PIWNVMMWTSLFLGNGVLLCFYSQEWYARQHC) form a helical membrane-spanning segment. Residues cysteine 528 and cysteine 546 are joined by a disulfide bond. The Lumenal segment spans residues 529-550 (PLKNPTFLDYVRPRSWTCRYVF).

The protein belongs to the membrane-bound acyltransferase family. Sterol o-acyltransferase subfamily. May form homo- or heterodimers. Interacts with UBIAD1. In terms of tissue distribution, expressed in most tissues, but most strongly in the adrenal gland. Expressed more strongly in liver Kupffer cells than in hepatocytes.

The protein localises to the endoplasmic reticulum membrane. It carries out the reaction a sterol + a long-chain fatty acyl-CoA = a long-chain 3-hydroxysterol ester + CoA. The catalysed reaction is cholesterol + an acyl-CoA = a cholesterol ester + CoA. The enzyme catalyses cholesterol + (9Z)-octadecenoyl-CoA = cholesteryl (9Z-octadecenoate) + CoA. It catalyses the reaction cholesterol + hexadecanoyl-CoA = cholesteryl hexadecanoate + CoA. It carries out the reaction octadecanoyl-CoA + cholesterol = cholesteryl octadecanoate + CoA. The catalysed reaction is (9Z,12Z)-octadecadienoyl-CoA + cholesterol = cholesteryl (9Z,12Z)-octadecadienoate + CoA. The enzyme catalyses (5Z,8Z,11Z,14Z)-eicosatetraenoyl-CoA + cholesterol = cholesteryl (5Z,8Z,11Z,14Z)-eicosatetraenoate + CoA. It catalyses the reaction (9Z)-hexadecenoyl-CoA + cholesterol = cholesteryl (9Z)-hexadecenoate + CoA. It carries out the reaction (11Z)-octadecenoyl-CoA + cholesterol = cholesteryl (11Z)-octadecenoate + CoA. The catalysed reaction is (7Z)-octadecenoyl-CoA + cholesterol = cholesteryl (7Z)-octadecenoate + CoA. Functionally, catalyzes the formation of fatty acid-cholesterol esters, which are less soluble in membranes than cholesterol. Plays a role in lipoprotein assembly and dietary cholesterol absorption. Preferentially utilizes oleoyl-CoA ((9Z)-octadecenoyl-CoA) as a substrate: shows a higher activity towards an acyl-CoA substrate with a double bond at the delta-9 position (9Z) than towards saturated acyl-CoA or an unsaturated acyl-CoA with a double bond at the delta-7 (7Z) or delta-11 (11Z) positions. The protein is Sterol O-acyltransferase 1 (SOAT1) of Macaca fascicularis (Crab-eating macaque).